Reading from the N-terminus, the 285-residue chain is Diphthine methyl ester synthase (285 aa).

S-adenosyl-L-methionine is bound by residues leucine 9, aspartate 84, glycine 87, 112 to 113, leucine 163, valine 221, and histidine 246; that span reads SI.

It belongs to the diphthine synthase family.

Its subcellular location is the cytoplasm. It carries out the reaction 2-[(3S)-amino-3-carboxypropyl]-L-histidyl-[translation elongation factor 2] + 4 S-adenosyl-L-methionine = diphthine methyl ester-[translation elongation factor 2] + 4 S-adenosyl-L-homocysteine + 3 H(+). It participates in protein modification; peptidyl-diphthamide biosynthesis. In terms of biological role, S-adenosyl-L-methionine-dependent methyltransferase that catalyzes four methylations of the modified target histidine residue in translation elongation factor 2 (EF-2), to form an intermediate called diphthine methyl ester. The four successive methylation reactions represent the second step of diphthamide biosynthesis. The sequence is that of Diphthine methyl ester synthase (dph5) from Aspergillus fumigatus (strain ATCC MYA-4609 / CBS 101355 / FGSC A1100 / Af293) (Neosartorya fumigata).